A 71-amino-acid chain; its full sequence is Agnoprotein (71 aa).

The Cytoplasmic segment spans residues M1–R27. 2 positions are modified to phosphoserine; by host: S7 and S11. T21 bears the Phosphothreonine; by host mark. The chain crosses the membrane as a helical; Signal-anchor for type II membrane protein span at residues I28–D44. Topologically, residues S45–T71 are extracellular. The interval S45–T71 is disordered.

The protein belongs to the polyomavirus agnoprotein family. In terms of assembly, homooligomer. Interacts with VP1. Interacts with large T antigen; this interaction may impact upon the activity of T-antigen on the control of viral gene transcription and replication. Interacts with small t antigen. Interacts with host PP2A subunits for dephosphorylation. Interacts (via N-terminus) with host YBX1; this interaction modulates transcriptional activity genomic promoters. Interacts (via N-terminus) with host TP53. Interacts with host FEZ1; this interaction disrupts the association between FEZ1 and microtubules. Interacts with host CBX5; this interaction induces the dissociation of CBX5 from LBR, resulting in destabilization of the nuclear envelope. In terms of processing, phosphorylated by host PKC. Phosphorylation alters the stability and may also have an impact on the subcellular location.

Its subcellular location is the host cytoplasm. The protein localises to the host nucleus membrane. It localises to the host rough endoplasmic reticulum membrane. It is found in the host cell membrane. Alters the structure of the nuclear envelope by interacting with host CBX5 and disrupting CBX5 association with LBR. Involved in the perinuclear-nuclear localization of the capsid protein VP1 during virion assembly and maturation. Plays an important role in the release of progeny virions from infected cells and in viral propagation, probably by acting as a viral ionic channel in the host plasma membrane. Allows influx of extracellular calcium ions in the host cell. May contribute to viral genome transcription and translation of viral late proteins. This is Agnoprotein from Homo sapiens (Human).